The primary structure comprises 251 residues: uncharacterized protein (251 aa).

The protein belongs to the FAM243 family.

This is an uncharacterized protein from Bos taurus (Bovine).